Consider the following 149-residue polypeptide: Large ribosomal subunit protein uL11 (149 aa).

This sequence belongs to the universal ribosomal protein uL11 family. Part of the ribosomal stalk of the 50S ribosomal subunit. Interacts with L10 and the large rRNA to form the base of the stalk. L10 forms an elongated spine to which L12 dimers bind in a sequential fashion forming a multimeric L10(L12)X complex. Post-translationally, one or more lysine residues are methylated.

Functionally, forms part of the ribosomal stalk which helps the ribosome interact with GTP-bound translation factors. This Methylobacterium nodulans (strain LMG 21967 / CNCM I-2342 / ORS 2060) protein is Large ribosomal subunit protein uL11.